Reading from the N-terminus, the 301-residue chain is Homoserine O-acetyltransferase (301 aa).

Residue Cys-142 is the Acyl-thioester intermediate of the active site. Substrate-binding residues include Lys-163 and Ser-192. The Proton acceptor role is filled by His-235. Glu-237 is a catalytic residue. Residue Arg-249 coordinates substrate.

The protein belongs to the MetA family.

It localises to the cytoplasm. It catalyses the reaction L-homoserine + acetyl-CoA = O-acetyl-L-homoserine + CoA. Its pathway is amino-acid biosynthesis; L-methionine biosynthesis via de novo pathway; O-acetyl-L-homoserine from L-homoserine: step 1/1. In terms of biological role, transfers an acetyl group from acetyl-CoA to L-homoserine, forming acetyl-L-homoserine. The protein is Homoserine O-acetyltransferase of Lachnoclostridium phytofermentans (strain ATCC 700394 / DSM 18823 / ISDg) (Clostridium phytofermentans).